An 87-amino-acid polypeptide reads, in one-letter code: Small ribosomal subunit protein uS17 (87 aa).

It belongs to the universal ribosomal protein uS17 family. Part of the 30S ribosomal subunit.

In terms of biological role, one of the primary rRNA binding proteins, it binds specifically to the 5'-end of 16S ribosomal RNA. This is Small ribosomal subunit protein uS17 from Syntrophobacter fumaroxidans (strain DSM 10017 / MPOB).